The primary structure comprises 102 residues: NADH-quinone oxidoreductase subunit K (102 aa).

Transmembrane regions (helical) follow at residues 6–26 (LEHG…GLMV), 30–50 (ILFV…AFIV), and 62–82 (VMFI…LAIL).

This sequence belongs to the complex I subunit 4L family. NDH-1 is composed of 13 different subunits. Subunits NuoA, H, J, K, L, M, N constitute the membrane sector of the complex.

It is found in the cell inner membrane. The catalysed reaction is a quinone + NADH + 5 H(+)(in) = a quinol + NAD(+) + 4 H(+)(out). Functionally, NDH-1 shuttles electrons from NADH, via FMN and iron-sulfur (Fe-S) centers, to quinones in the respiratory chain. The immediate electron acceptor for the enzyme in this species is believed to be ubiquinone. Couples the redox reaction to proton translocation (for every two electrons transferred, four hydrogen ions are translocated across the cytoplasmic membrane), and thus conserves the redox energy in a proton gradient. The polypeptide is NADH-quinone oxidoreductase subunit K (Pseudomonas putida (strain W619)).